We begin with the raw amino-acid sequence, 117 residues long: Immunoglobulin heavy variable 3-74 (117 aa).

The first 19 residues, 1–19 (MEFGLSWVFLVAILKGVQC), serve as a signal peptide directing secretion. Residues 20–44 (EVQLVESGGGLVQPGGSLRLSCAAS) form a framework-1 region. The region spanning 20–117 (EVQLVESGGG…EDTAVYYCAR (98 aa)) is the Ig-like domain. Cysteine 41 and cysteine 115 are disulfide-bonded. Positions 45 to 52 (GFTFSSYW) are complementarity-determining-1. Residues 53–69 (MHWVRQAPGKGLVWVSR) form a framework-2 region. A complementarity-determining-2 region spans residues 70 to 77 (INSDGSST). The tract at residues 78-115 (SYADSVKGRFTISRDNAKNTLYLQMNSLRAEDTAVYYC) is framework-3. Positions 116–117 (AR) are complementarity-determining-3.

As to quaternary structure, immunoglobulins are composed of two identical heavy chains and two identical light chains; disulfide-linked.

It is found in the secreted. The protein resides in the cell membrane. Functionally, v region of the variable domain of immunoglobulin heavy chains that participates in the antigen recognition. Immunoglobulins, also known as antibodies, are membrane-bound or secreted glycoproteins produced by B lymphocytes. In the recognition phase of humoral immunity, the membrane-bound immunoglobulins serve as receptors which, upon binding of a specific antigen, trigger the clonal expansion and differentiation of B lymphocytes into immunoglobulins-secreting plasma cells. Secreted immunoglobulins mediate the effector phase of humoral immunity, which results in the elimination of bound antigens. The antigen binding site is formed by the variable domain of one heavy chain, together with that of its associated light chain. Thus, each immunoglobulin has two antigen binding sites with remarkable affinity for a particular antigen. The variable domains are assembled by a process called V-(D)-J rearrangement and can then be subjected to somatic hypermutations which, after exposure to antigen and selection, allow affinity maturation for a particular antigen. The chain is Immunoglobulin heavy variable 3-74 from Homo sapiens (Human).